Here is a 588-residue protein sequence, read N- to C-terminus: Schlafen family member 12-like (588 aa).

Residues 566 to 586 traverse the membrane as a helical segment; that stretch reads IFLFVCLFRFCLFVCWFVCFF.

The protein belongs to the Schlafen family.

The protein localises to the membrane. This chain is Schlafen family member 12-like (SLFN12L), found in Homo sapiens (Human).